A 432-amino-acid polypeptide reads, in one-letter code: Phosphomethylpyrimidine synthase (432 aa).

Substrate contacts are provided by residues N66, M95, Y124, H163, 185–187, 226–229, and E265; these read SRG and DGLR. H269 lines the Zn(2+) pocket. Y292 serves as a coordination point for substrate. H333 contacts Zn(2+). 3 residues coordinate [4Fe-4S] cluster: C409, C412, and C416.

It belongs to the ThiC family. It depends on [4Fe-4S] cluster as a cofactor.

The catalysed reaction is 5-amino-1-(5-phospho-beta-D-ribosyl)imidazole + S-adenosyl-L-methionine = 4-amino-2-methyl-5-(phosphooxymethyl)pyrimidine + CO + 5'-deoxyadenosine + formate + L-methionine + 3 H(+). It functions in the pathway cofactor biosynthesis; thiamine diphosphate biosynthesis. In terms of biological role, catalyzes the synthesis of the hydroxymethylpyrimidine phosphate (HMP-P) moiety of thiamine from aminoimidazole ribotide (AIR) in a radical S-adenosyl-L-methionine (SAM)-dependent reaction. In Desulforamulus reducens (strain ATCC BAA-1160 / DSM 100696 / MI-1) (Desulfotomaculum reducens), this protein is Phosphomethylpyrimidine synthase.